Here is a 131-residue protein sequence, read N- to C-terminus: Gem-associated protein 7 (131 aa).

The residue at position 1 (Met1) is an N-acetylmethionine. Residues 1 to 29 (MQTPVNIPVPVLRLPRGPDGFSRGFAPDG) enclose the SUZ-C domain. The residue at position 3 (Thr3) is a Phosphothreonine. In terms of domain architecture, Sm spans 65 to 131 (RYLRSLLAMV…SDIISYTFKP (67 aa)).

It belongs to the gemin-7 family. As to quaternary structure, part of the core SMN complex that contains SMN1, GEMIN2/SIP1, DDX20/GEMIN3, GEMIN4, GEMIN5, GEMIN6, GEMIN7, GEMIN8 and STRAP/UNRIP. Part of the SMN-Sm complex that contains SMN1, GEMIN2/SIP1, DDX20/GEMIN3, GEMIN4, GEMIN5, GEMIN6, GEMIN7, GEMIN8, STRAP/UNRIP and the Sm proteins SNRPB, SNRPD1, SNRPD2, SNRPD3, SNRPE, SNRPF and SNRPG. Interacts with GEMIN6; the interaction is direct. Interacts with STRAP/UNRIP; the interaction is direct. Interacts with GEMIN8; the interaction is direct. Interacts with SNRPB, SNRPD2, SNRPD3 and SNRPE; the interaction is direct.

It is found in the nucleus. Its subcellular location is the nucleoplasm. The protein resides in the gem. The protein localises to the cytoplasm. Its function is as follows. The SMN complex catalyzes the assembly of small nuclear ribonucleoproteins (snRNPs), the building blocks of the spliceosome, and thereby plays an important role in the splicing of cellular pre-mRNAs. Most spliceosomal snRNPs contain a common set of Sm proteins SNRPB, SNRPD1, SNRPD2, SNRPD3, SNRPE, SNRPF and SNRPG that assemble in a heptameric protein ring on the Sm site of the small nuclear RNA to form the core snRNP (Sm core). In the cytosol, the Sm proteins SNRPD1, SNRPD2, SNRPE, SNRPF and SNRPG are trapped in an inactive 6S pICln-Sm complex by the chaperone CLNS1A that controls the assembly of the core snRNP. To assemble core snRNPs, the SMN complex accepts the trapped 5Sm proteins from CLNS1A forming an intermediate. Binding of snRNA inside 5Sm triggers eviction of the SMN complex, thereby allowing binding of SNRPD3 and SNRPB to complete assembly of the core snRNP. The polypeptide is Gem-associated protein 7 (GEMIN7) (Homo sapiens (Human)).